We begin with the raw amino-acid sequence, 610 residues long: Peptidyl-prolyl cis-trans isomerase 9 (610 aa).

S13 carries the post-translational modification Phosphoserine. WD repeat units follow at residues 45-83 (MHNA…VEYI), 88-127 (AHNA…LVNI), and 177-216 (KHTA…QKPD). A PPIase cyclophilin-type domain is found at 453–607 (LGKAAIIHTT…EPTKIINISI (155 aa)).

Belongs to the cyclophilin-type PPIase family.

It is found in the nucleus. The catalysed reaction is [protein]-peptidylproline (omega=180) = [protein]-peptidylproline (omega=0). Its function is as follows. PPIases accelerate the folding of proteins. It catalyzes the cis-trans isomerization of proline imidic peptide bonds in oligopeptides. The protein is Peptidyl-prolyl cis-trans isomerase 9 (cyp9) of Schizosaccharomyces pombe (strain 972 / ATCC 24843) (Fission yeast).